A 676-amino-acid polypeptide reads, in one-letter code: Methionine--tRNA ligase (676 aa).

The 'HIGH' region signature appears at 15-25 (PYANGPIHLGH). Residues Cys146, Cys149, Cys159, and Cys162 each coordinate Zn(2+). A 'KMSKS' region motif is present at residues 332 to 336 (KMSKS). Lys335 serves as a coordination point for ATP. Residues 575–676 (DFAKIDLRIA…EGAQPGMRVK (102 aa)) form the tRNA-binding domain.

It belongs to the class-I aminoacyl-tRNA synthetase family. MetG type 1 subfamily. Homodimer. Requires Zn(2+) as cofactor.

The protein resides in the cytoplasm. The enzyme catalyses tRNA(Met) + L-methionine + ATP = L-methionyl-tRNA(Met) + AMP + diphosphate. Is required not only for elongation of protein synthesis but also for the initiation of all mRNA translation through initiator tRNA(fMet) aminoacylation. The sequence is that of Methionine--tRNA ligase from Shewanella sp. (strain ANA-3).